We begin with the raw amino-acid sequence, 550 residues long: Cell pattern formation-associated protein STUA (550 aa).

The 107-residue stretch at 86–192 (RVTATLWEDE…HNIGALLYHP (107 aa)) folds into the HTH APSES-type domain. Positions 120–141 (GTKLLNVAGMTRGRRDGILKSE) form a DNA-binding region, H-T-H motif. The segment covering 246-266 (SLANGPQSLASTPQPLTNGSQ) has biased composition (polar residues). Disordered stretches follow at residues 246–277 (SLAN…GMLK), 371–412 (HHQP…VKRR), 447–467 (KRRD…DHLN), and 527–550 (APVY…QSFG). The segment covering 385 to 395 (RGRDEDDDVHR) has biased composition (basic and acidic residues). The interval 517–546 (TVAASPSYPSAPVYDTGARPPSAISAPRRQ) is nuclear localization domain.

This sequence belongs to the EFG1/PHD1/stuA family.

Its subcellular location is the nucleus. In terms of biological role, transcription factor that regulates asexual reproduction. Binds the StuA-response elements (StRE) with the consensus sequence 5'-(A/T)CGCG(T/A)N(A/C)-3' at the promoters of target genes. Differentially regulates the development of macroconidia, microconidia, and chlamydospores. Acts as a positive regulator for the development of macroconidia and as a negative regulator for the development of chlamydospores. Involved in microconidium formation specifically in infected plants. This chain is Cell pattern formation-associated protein STUA, found in Fusarium oxysporum (Fusarium vascular wilt).